A 237-amino-acid polypeptide reads, in one-letter code: ADTIVAVELDTYPNTDIGDPSYPHIGIDIKSVRSKKTAKWNMQNGKVGTAHIIYNSVGKRLSAVVSYPNGDSATVSYDVDLDNVLPEWVRVGLSASTGLYKETNTILSWSFTSKLKSNSTHETNALHFVFNQFSKDQKDLILQGDATTGTDGNLELTRVSSNGSPQGSSVGRALFYAPVHIWESSAVVASFDATFTFLIKSPDSHPADGIAFFISNIDSSIPSGSTGRLLGLFPDAN.

Mn(2+) is bound by residues Glu8 and Asp10. Ca(2+) contacts are provided by Asp10, Tyr12, Asn14, and Asp19. Position 14 (Asn14) interacts with a carbohydrate. Residues Asp19 and His24 each coordinate Mn(2+). A carbohydrate-binding positions include Gly70, 98 to 100, Asp208, and Arg228; that span reads GLY.

Belongs to the leguminous lectin family. In terms of assembly, homotetramer. Post-translationally, concanavalin A-like lectins of the Diocleinae subtribe undergo proteolytic processing referred to as circular permutation. The propeptide is split into an N-terminal and a C-terminal part, the gamma and beta chain, respectively. These are then religated in beta-gamma order to form the mature alpha chain. The beta and gamma chains can often be detected in cell extracts. Residues 1-118 of the mature chain, as displayed here, probably constitute the beta chain in the propeptide, residues 119-237 the gamma chain.

Functionally, D-mannose/D-glucose-binding lectin which binds alpha-methyl-D-mannoside, D-mannose and D-glucose in that order. Also binds to serum fetuin and ovalbumin. Has hemagglutinating activity towards rabbit erythrocytes. Is not toxic towards larvae of the brine shrimp Artemia. Induces relaxation in rat endothelized aorta. Shows a transient edematogenic effect in rat. This is Concanavalin V from Canavalia cathartica (Jackbean).